Here is a 276-residue protein sequence, read N- to C-terminus: Undecaprenyl-diphosphatase (276 aa).

6 consecutive transmembrane segments (helical) span residues arginine 43–phenylalanine 63, leucine 85–isoleucine 105, leucine 109–alanine 129, alanine 183–serine 203, valine 218–leucine 238, and isoleucine 254–alanine 274.

It belongs to the UppP family.

It localises to the cell inner membrane. It carries out the reaction di-trans,octa-cis-undecaprenyl diphosphate + H2O = di-trans,octa-cis-undecaprenyl phosphate + phosphate + H(+). In terms of biological role, catalyzes the dephosphorylation of undecaprenyl diphosphate (UPP). Confers resistance to bacitracin. In Pseudomonas syringae pv. tomato (strain ATCC BAA-871 / DC3000), this protein is Undecaprenyl-diphosphatase.